We begin with the raw amino-acid sequence, 102 residues long: uncharacterized protein (102 aa).

Residues 77–102 are disordered; that stretch reads RKDGDEKSKPNSKDYASRPIRDHSKI.

This is an uncharacterized protein from Microplitis demolitor (Parasitoid wasp).